The following is a 446-amino-acid chain: CBL-interacting protein kinase 8 (446 aa).

In terms of domain architecture, Protein kinase spans 13 to 266 (YEVGRTIGEG…IEEIRNDEWF (254 aa)). ATP contacts are provided by residues 19–27 (IGEGTFAKV) and Lys42. Asp136 serves as the catalytic Proton acceptor. An activation loop region spans residues 154–181 (DFGLSAWPAQGGALLRTTCGTPNYVAPE). The 29-residue stretch at 301–329 (LDDEAGPLTLNAFDLIILSQGLNLAALFD) folds into the NAF domain. Positions 336–365 (KLQNRFLSRKPAKVIMSSMEVVAQSMGYKT) are PPI.

This sequence belongs to the protein kinase superfamily. CAMK Ser/Thr protein kinase family. SNF1 subfamily. Requires Mn(2+) as cofactor.

The enzyme catalyses L-seryl-[protein] + ATP = O-phospho-L-seryl-[protein] + ADP + H(+). The catalysed reaction is L-threonyl-[protein] + ATP = O-phospho-L-threonyl-[protein] + ADP + H(+). Functionally, CIPK serine-threonine protein kinases interact with CBL proteins. Binding of a CBL protein to the regulatory NAF domain of CIPK protein lead to the activation of the kinase in a calcium-dependent manner. The chain is CBL-interacting protein kinase 8 (CIPK8) from Oryza sativa subsp. japonica (Rice).